The chain runs to 23 residues: Clavanin-B (23 aa).

At Phe-23 the chain carries Phenylalanine amide.

The protein resides in the secreted. Functionally, has antimicrobial activity. This is Clavanin-B from Styela clava (Sea squirt).